The chain runs to 212 residues: MRLTGLLCVALWSASAVVLAEHQPCRPPPQTHGNLWVTAAKGAPASVGEFNYDSQARKLHFKDDALHVNKTDHLEMLIFFEEGIFYDIDSHNQSCHKKTLQSTYHCLEVPPNATHVTEGYLGSEFIGDQGVRMRKWRKRVPELDGVVTVATTSCGCVTLFATLFTDSNDVLVFNFLDVEMKVKNPLEVFVPPSYCDGVALEEEGDTFFGLFH.

The signal sequence occupies residues 1 to 20 (MRLTGLLCVALWSASAVVLA). N69, N92, and N112 each carry an N-linked (GlcNAc...) asparagine glycan.

The protein belongs to the ependymin family. In terms of assembly, forms disulfide-linked dimers. Binds calcium through the terminal sialic acids. EPDs are synthesized in the meninx and secreted in the cerebrospinal fluid.

It is found in the secreted. In terms of biological role, may play a role in neural plasticity. May be involved during axon regeneration. This Clupea harengus (Atlantic herring) protein is Ependymin (epd).